We begin with the raw amino-acid sequence, 401 residues long: MINKFKNFVSNYQQSNHYKEPLGFGIARVDIAPISKKILCATYPVLNWKDENLGSYAVFCNSLSKEKILKESASERVIEIDESFVLKALDFYTPFLNEAYSNKMAHKNIQVVLELLKALEENRLKNSDGESLYRLVILYEDKPCESVESAYMKLLALSLGKAPLRSLNLEGIFNQLSNAAWSGNKPYELEWLRMNEVALKMRDHFPSIDFIDKFPRYLMQLIPEFDNIRLLDSSKTRFGAYLGTGGYTQMPGASYVNFNAGAMGVCMNEGRISSSVVVGAGTDIGGGASVLGVLSGGNNNPISIGKNCLLGANSVTGISLGDGCIVDAGVAILAGSVIEIEENEFKKLLEVNSALEKHANNLYKGKELSGKNGVHFRSNSQNGKLIAFRSVKKIELNQNLH.

Residue glutamate 269 is the Acyl-anhydride intermediate of the active site. Residues arginine 271, glycine 286, serine 289, alanine 312, 327–328 (DA), glycine 335, and lysine 364 contribute to the succinyl-CoA site.

The protein belongs to the type 2 tetrahydrodipicolinate N-succinyltransferase family. Homotrimer.

The protein resides in the cytoplasm. It carries out the reaction (S)-2,3,4,5-tetrahydrodipicolinate + succinyl-CoA + H2O = (S)-2-succinylamino-6-oxoheptanedioate + CoA. It participates in amino-acid biosynthesis; L-lysine biosynthesis via DAP pathway; LL-2,6-diaminopimelate from (S)-tetrahydrodipicolinate (succinylase route): step 1/3. Its function is as follows. Catalyzes the conversion of the cyclic tetrahydrodipicolinate (THDP) into the acyclic N-succinyl-L-2-amino-6-oxopimelate using succinyl-CoA. The protein is 2,3,4,5-tetrahydropyridine-2,6-dicarboxylate N-succinyltransferase of Helicobacter pylori (strain ATCC 700392 / 26695) (Campylobacter pylori).